A 280-amino-acid chain; its full sequence is uncharacterized protein (280 aa).

Disordered regions lie at residues 1–83 and 248–280; these read MELK…EEEQ and IRHREEKDQRDQNQKQKQDDKEQDSYKIEEARL. The span at 12 to 25 shows a compositional bias: polar residues; that stretch reads SAKTDNHTVYQNSP. 2 stretches are compositionally biased toward basic and acidic residues: residues 41–71 and 249–280; these read KQTRQEKTTSSKGNTRTESRKFADEEKRVDD and RHREEKDQRDQNQKQKQDDKEQDSYKIEEARL.

This sequence belongs to the chlamydial CPn_0705/CT_671/TC_0042 family.

This is an uncharacterized protein from Chlamydia pneumoniae (Chlamydophila pneumoniae).